An 85-amino-acid polypeptide reads, in one-letter code: UPF0386 protein Atu1321 (85 aa).

The protein belongs to the UPF0386 family.

The protein is UPF0386 protein Atu1321 of Agrobacterium fabrum (strain C58 / ATCC 33970) (Agrobacterium tumefaciens (strain C58)).